The chain runs to 403 residues: S-adenosylmethionine synthase (403 aa).

H15 provides a ligand contact to ATP. D17 provides a ligand contact to Mg(2+). Position 43 (E43) interacts with K(+). The L-methionine site is built by E56 and Q99. The tract at residues 99-109 (QSPDINQGVDR) is flexible loop. ATP contacts are provided by residues 166–168 (DAK), 232–233 (KF), D241, 247–248 (RK), A264, and K268. Residue D241 participates in L-methionine binding. Residue K272 coordinates L-methionine.

It belongs to the AdoMet synthase family. As to quaternary structure, homotetramer; dimer of dimers. Requires Mg(2+) as cofactor. It depends on K(+) as a cofactor.

It localises to the cytoplasm. It catalyses the reaction L-methionine + ATP + H2O = S-adenosyl-L-methionine + phosphate + diphosphate. The protein operates within amino-acid biosynthesis; S-adenosyl-L-methionine biosynthesis; S-adenosyl-L-methionine from L-methionine: step 1/1. Catalyzes the formation of S-adenosylmethionine (AdoMet) from methionine and ATP. The overall synthetic reaction is composed of two sequential steps, AdoMet formation and the subsequent tripolyphosphate hydrolysis which occurs prior to release of AdoMet from the enzyme. In Xanthomonas campestris pv. campestris (strain ATCC 33913 / DSM 3586 / NCPPB 528 / LMG 568 / P 25), this protein is S-adenosylmethionine synthase.